A 196-amino-acid polypeptide reads, in one-letter code: ATP-dependent Clp protease proteolytic subunit (196 aa).

The active-site Nucleophile is the S99. H124 is a catalytic residue.

This sequence belongs to the peptidase S14 family. In terms of assembly, fourteen ClpP subunits assemble into 2 heptameric rings which stack back to back to give a disk-like structure with a central cavity, resembling the structure of eukaryotic proteasomes.

It localises to the cytoplasm. It carries out the reaction Hydrolysis of proteins to small peptides in the presence of ATP and magnesium. alpha-casein is the usual test substrate. In the absence of ATP, only oligopeptides shorter than five residues are hydrolyzed (such as succinyl-Leu-Tyr-|-NHMec, and Leu-Tyr-Leu-|-Tyr-Trp, in which cleavage of the -Tyr-|-Leu- and -Tyr-|-Trp bonds also occurs).. Its function is as follows. Cleaves peptides in various proteins in a process that requires ATP hydrolysis. Has a chymotrypsin-like activity. Plays a major role in the degradation of misfolded proteins. In Helicobacter pylori (strain ATCC 700392 / 26695) (Campylobacter pylori), this protein is ATP-dependent Clp protease proteolytic subunit.